The chain runs to 297 residues: Protoheme IX farnesyltransferase 1 (297 aa).

A run of 9 helical transmembrane segments spans residues 23–43, 45–65, 93–113, 117–137, 145–165, 171–191, 216–236, 241–261, and 277–297; these read VVVL…RAGV, WSVL…AAVV, LPAL…LLAF, LTAW…TGFL, IVIG…AVSG, PLLL…ALAI, LHIL…YAIH, LYLA…WVLY, and IAYL…LLNL.

The protein belongs to the UbiA prenyltransferase family. Protoheme IX farnesyltransferase subfamily.

It localises to the cell inner membrane. It carries out the reaction heme b + (2E,6E)-farnesyl diphosphate + H2O = Fe(II)-heme o + diphosphate. It functions in the pathway porphyrin-containing compound metabolism; heme O biosynthesis; heme O from protoheme: step 1/1. In terms of biological role, converts heme B (protoheme IX) to heme O by substitution of the vinyl group on carbon 2 of heme B porphyrin ring with a hydroxyethyl farnesyl side group. The sequence is that of Protoheme IX farnesyltransferase 1 from Pseudomonas putida (strain GB-1).